The primary structure comprises 146 residues: Ribonuclease H (146 aa).

The RNase H type-1 domain maps to Met-1–Leu-136. 4 residues coordinate Mg(2+): Asp-9, Glu-47, Asp-69, and Asp-128.

Belongs to the RNase H family. In terms of assembly, monomer. Mg(2+) serves as cofactor.

The protein resides in the cytoplasm. It carries out the reaction Endonucleolytic cleavage to 5'-phosphomonoester.. Functionally, endonuclease that specifically degrades the RNA of RNA-DNA hybrids. The sequence is that of Ribonuclease H from Campylobacter jejuni subsp. jejuni serotype O:23/36 (strain 81-176).